Consider the following 274-residue polypeptide: MQNITQSWFVQGMIKATTDAWLKGWDERNGGNLTLRLDDADIAPYHDNFHQQPRYIPLSQPMPLLANTPFIVTGSGKFFRNVQLDPAANLGIVKVDSDGAGYHILWGLTNEAVPTSELPAHFLSHFERIKATNGKDRVIMHCHATNLIALTYVLENDTAVFTRQLWEGSTECLVVFPDGVGILPWMVPGTDEIGQATAQEMQKHSLVLWPFHGVFGSGPTLDETFGLIDTAEKSAQILVKVYSMSGMKQTISREELIALGQRFGVTPLASALAL.

The active site involves Glu-117. 3 residues coordinate Zn(2+): His-141, His-143, and His-212.

Belongs to the aldolase class II family. RhaD subfamily. Homotetramer. Zn(2+) serves as cofactor.

It localises to the cytoplasm. The catalysed reaction is L-rhamnulose 1-phosphate = (S)-lactaldehyde + dihydroxyacetone phosphate. The protein operates within carbohydrate degradation; L-rhamnose degradation; glycerone phosphate from L-rhamnose: step 3/3. Functionally, catalyzes the reversible cleavage of L-rhamnulose-1-phosphate to dihydroxyacetone phosphate (DHAP) and L-lactaldehyde. This Escherichia coli O81 (strain ED1a) protein is Rhamnulose-1-phosphate aldolase.